The sequence spans 674 residues: Probable L-type lectin-domain containing receptor kinase I.5 (674 aa).

The first 22 residues, 1–22, serve as a signal peptide directing secretion; it reads MSKGLFLIWLISSFHLISFSTS. Topologically, residues 23 to 286 are extracellular; sequence SKDTSFVFNG…RPRAEHKKVQ (264 aa). The legume-lectin like stretch occupies residues 25–258; the sequence is DTSFVFNGFG…YHYLLGWSFS (234 aa). N-linked (GlcNAc...) asparagine glycosylation is found at asparagine 124, asparagine 181, asparagine 185, asparagine 204, and asparagine 225. Residues 287–307 form a helical membrane-spanning segment; the sequence is FALIIALPVILAIVVMAVLAG. At 308–674 the chain is on the cytoplasmic side; sequence VYYHRKKKYA…DHEQPLEFKS (367 aa). The Protein kinase domain maps to 344–625; sequence FHKDRFLGRG…LPLPDFSPYT (282 aa). ATP contacts are provided by residues 350–358 and lysine 372; that span reads LGRGGFGEV. The active-site Proton acceptor is the aspartate 468. The segment covering 649–662 has biased composition (low complexity); the sequence is NWSAPSASSSSANN. Positions 649-674 are disordered; it reads NWSAPSASSSSANNSKDHEQPLEFKS. Residues 663-674 are compositionally biased toward basic and acidic residues; that stretch reads SKDHEQPLEFKS.

The protein in the C-terminal section; belongs to the protein kinase superfamily. Ser/Thr protein kinase family. In the N-terminal section; belongs to the leguminous lectin family.

It localises to the cell membrane. It carries out the reaction L-seryl-[protein] + ATP = O-phospho-L-seryl-[protein] + ADP + H(+). The enzyme catalyses L-threonyl-[protein] + ATP = O-phospho-L-threonyl-[protein] + ADP + H(+). The polypeptide is Probable L-type lectin-domain containing receptor kinase I.5 (LECRK15) (Arabidopsis thaliana (Mouse-ear cress)).